Reading from the N-terminus, the 172-residue chain is Large ribosomal subunit protein uL10 (172 aa).

Belongs to the universal ribosomal protein uL10 family. In terms of assembly, part of the ribosomal stalk of the 50S ribosomal subunit. The N-terminus interacts with L11 and the large rRNA to form the base of the stalk. The C-terminus forms an elongated spine to which L12 dimers bind in a sequential fashion forming a multimeric L10(L12)X complex.

Its function is as follows. Forms part of the ribosomal stalk, playing a central role in the interaction of the ribosome with GTP-bound translation factors. The chain is Large ribosomal subunit protein uL10 from Chlorobium phaeobacteroides (strain DSM 266 / SMG 266 / 2430).